Reading from the N-terminus, the 133-residue chain is Magnetosome protein MamC (133 aa).

The Cytoplasmic portion of the chain corresponds to 1 to 5; it reads MAAFN. A helical membrane pass occupies residues 6–26; it reads LALYLSKSIPGVGVLGGVIGG. The Lumenal segment spans residues 27 to 67; that stretch reads SAALAKNLKAKQRGEITTEEAVIDTGKEALGAGLATTVSAY. The tract at residues 37–57 is magnetite interacting component (MIC) binds magnetite; sequence KQRGEITTEEAVIDTGKEALG. The helical transmembrane segment at 68–88 threads the bilayer; the sequence is AAGVVGGGLVVSLGTAFAVAV. Topologically, residues 89–133 are cytoplasmic; the sequence is AGKYAWDYGMEQMEAKLQEKKHQEQGGQTYGDNPDPFDPQELETP. The interval 105–133 is disordered; sequence LQEKKHQEQGGQTYGDNPDPFDPQELETP.

Belongs to the magnetosome MamC family. Probably interacts with MamA.

The protein resides in the magnetosome membrane. Probably helps control the size of magnetite crystals; in vitro synthesis of magnetite yields larger and more well-developed magnetite crystals in the presence of purified MamC. Binds Fe(3+). The lumenal domain probably binds magnetite crystals, affecting crystal size and shape. Purified MamC self-assembles into micelles in the presence of ferric chloride hexahydrate (FeCl(3).6H(2)O); both oxygen and iron are present in the proteinaceous micelles. Whether this is relevant in vivo is unknown. This Magnetococcus marinus (strain ATCC BAA-1437 / JCM 17883 / MC-1) protein is Magnetosome protein MamC.